Consider the following 140-residue polypeptide: Gonadotropin subunit beta-2 (140 aa).

The first 24 residues, 1 to 24 (MSVYPECTWLLFVCLCHLLVSAGG), serve as a signal peptide directing secretion. 6 disulfides stabilise this stretch: cysteine 30-cysteine 78, cysteine 44-cysteine 93, cysteine 47-cysteine 131, cysteine 55-cysteine 109, cysteine 59-cysteine 111, and cysteine 114-cysteine 121. An N-linked (GlcNAc...) asparagine glycan is attached at asparagine 34.

Belongs to the glycoprotein hormones subunit beta family. As to quaternary structure, heterodimer of an alpha and a beta chain.

The protein resides in the secreted. Its function is as follows. Involved in gametogenesis and steroidogenesis. The protein is Gonadotropin subunit beta-2 (cgbb) of Anguilla anguilla (European freshwater eel).